Consider the following 229-residue polypeptide: MKFFKGKKDKTLDEAYDTLEKSVKGIDENIEKYNKELNVIKQKIEEEKKKNPINQHIINSLRNKAANIIQKKKVYENNKESTMGIQFNIDQIKYANDNVQLSIDTYKALKNTSKVLKKNIKKVNINKIEKLQDDLFDYIEDTKEIGNILSSSYDIPLNLDEQEIDAELALIEDSILDENVEQDNIASYIEDDKKEEDKNLLQQIPVEEKNFDAIQQKTKKETYFAQKES.

Residues 16 to 78 (YDTLEKSVKG…IQKKKVYENN (63 aa)) adopt a coiled-coil conformation.

It belongs to the SNF7 family.

The chain is Putative vacuolar protein sorting-associated protein 60 (VPS60) from Plasmodium falciparum (isolate 3D7).